Consider the following 241-residue polypeptide: Sugar fermentation stimulation protein homolog (241 aa).

This sequence belongs to the SfsA family.

The sequence is that of Sugar fermentation stimulation protein homolog from Nostoc punctiforme (strain ATCC 29133 / PCC 73102).